The chain runs to 371 residues: tRNA-specific 2-thiouridylase MnmA (371 aa).

ATP contacts are provided by residues 16-23 and Met42; that span reads GMSGGVDS. The interval 102–104 is interaction with target base in tRNA; sequence NPD. Residue Cys107 is the Nucleophile of the active site. Residues Cys107 and Cys204 are joined by a disulfide bond. Gly132 is a binding site for ATP. The interval 154–156 is interaction with tRNA; the sequence is KDQ. Cys204 (cysteine persulfide intermediate) is an active-site residue. Residues 316 to 317 are interaction with tRNA; that stretch reads RY.

Belongs to the MnmA/TRMU family.

The protein localises to the cytoplasm. It catalyses the reaction S-sulfanyl-L-cysteinyl-[protein] + uridine(34) in tRNA + AH2 + ATP = 2-thiouridine(34) in tRNA + L-cysteinyl-[protein] + A + AMP + diphosphate + H(+). Catalyzes the 2-thiolation of uridine at the wobble position (U34) of tRNA, leading to the formation of s(2)U34. This chain is tRNA-specific 2-thiouridylase MnmA, found in Shewanella pealeana (strain ATCC 700345 / ANG-SQ1).